The sequence spans 198 residues: Holliday junction branch migration complex subunit RuvA (198 aa).

The interval 1–61 is domain I; that stretch reads MTLYKIGEIV…DYIQQTYGFK (61 aa). Residues 62–139 are domain II; that stretch reads TFKERLLFTD…KIIQNKEVKK (78 aa). Residues 140–144 are flexible linker; that stretch reads FDDIT. Residues 144 to 198 form a domain III region; it reads TNIKELKQTLNKLGFKASDIDYAVNNISSTKELDLMVEESINLITTQMHANNQTT.

Belongs to the RuvA family. Homotetramer. Forms an RuvA(8)-RuvB(12)-Holliday junction (HJ) complex. HJ DNA is sandwiched between 2 RuvA tetramers; dsDNA enters through RuvA and exits via RuvB. An RuvB hexamer assembles on each DNA strand where it exits the tetramer. Each RuvB hexamer is contacted by two RuvA subunits (via domain III) on 2 adjacent RuvB subunits; this complex drives branch migration. In the full resolvosome a probable DNA-RuvA(4)-RuvB(12)-RuvC(2) complex forms which resolves the HJ.

It is found in the cytoplasm. In terms of biological role, the RuvA-RuvB-RuvC complex processes Holliday junction (HJ) DNA during genetic recombination and DNA repair, while the RuvA-RuvB complex plays an important role in the rescue of blocked DNA replication forks via replication fork reversal (RFR). RuvA specifically binds to HJ cruciform DNA, conferring on it an open structure. The RuvB hexamer acts as an ATP-dependent pump, pulling dsDNA into and through the RuvAB complex. HJ branch migration allows RuvC to scan DNA until it finds its consensus sequence, where it cleaves and resolves the cruciform DNA. This Mycoplasmopsis synoviae (strain 53) (Mycoplasma synoviae) protein is Holliday junction branch migration complex subunit RuvA.